Here is a 681-residue protein sequence, read N- to C-terminus: Cell cycle checkpoint protein RAD17 (681 aa).

The RAD1-binding motif signature appears at 17-25 (DWVDPSFDD). The tract at residues 42-61 (VNNSSHRRKNGPSTLESSRF) is disordered. Phosphothreonine is present on Thr55. Residues Ser71 and Ser86 each carry the phosphoserine modification. ATP is bound at residue 137-144 (GPPGCGKT). 2 disordered regions span residues 344–377 (SSKG…KPDR) and 606–681 (HGMI…SDGT). Ser359 is subject to Phosphoserine. The interaction with MCM7 stretch occupies residues 432-681 (LVEPEEVVEM…IIEDYESDGT (250 aa)). Over residues 631-662 (EPTQATVPETWSLPLSQNSASELPASQPQPFS) the composition is skewed to polar residues. Thr633 is modified (phosphothreonine; by ATM). Phosphoserine; by ATR and ATM is present on residues Ser646 and Ser656. Acidic residues predominate over residues 666-681 (DMEENIIIEDYESDGT).

This sequence belongs to the rad17/RAD24 family. In terms of assembly, part of a DNA-binding complex containing RFC2, RFC3, RFC4 and RFC5. Interacts with RAD1 and RAD9 within the 9-1-1 (RAD1-RAD9-HUS1) complex. Interacts with RAD9B, POLE, SNU13 and MCM7. DNA damage promotes interaction with ATR or ATM and disrupts interaction with the 9-1-1 (RAD1-RAD9-HUS1) complex. Interacts (when phosphorylated) with NBN; promoting recruitment of the MRN complex to DNA damage sites. Phosphorylation on Ser-646 and Ser-656 is cell cycle-regulated, enhanced by genotoxic stress, and required for activation of checkpoint signaling. Phosphorylation is mediated by ATR upon UV or replication arrest, whereas it may be mediated both by ATR and ATM upon ionizing radiation. Phosphorylation on both sites is required for interaction with RAD1 but dispensable for interaction with RFC3 or RFC4. Phosphorylation at Thr-633 by ATM in response to DNA damage promotes interaction with NBN and recruitment of the MRN complex to DNA damage sites. In terms of tissue distribution, overexpressed in various cancer cell lines and in colon carcinoma (at protein level). Isoform 2 and isoform 3 are the most abundant isoforms in non irradiated cells (at protein level). Ubiquitous at low levels. Highly expressed in testis, where it is expressed within the germinal epithelium of the seminiferous tubuli. Weakly expressed in seminomas (testicular tumors).

It is found in the nucleus. The protein localises to the chromosome. Essential for sustained cell growth, maintenance of chromosomal stability, and ATR-dependent checkpoint activation upon DNA damage. Has a weak ATPase activity required for binding to chromatin. Participates in the recruitment of the 9-1-1 (RAD1-RAD9-HUS1) complex and RHNO1 onto chromatin, and in CHEK1 activation. Involved in homologous recombination by mediating recruitment of the MRN complex to DNA damage sites. May also serve as a sensor of DNA replication progression. The protein is Cell cycle checkpoint protein RAD17 of Homo sapiens (Human).